Here is a 294-residue protein sequence, read N- to C-terminus: Nucleotide-binding protein lp_0779 (294 aa).

12 to 19 lines the ATP pocket; it reads GMSGAGKT. Position 62–65 (62–65) interacts with GTP; it reads DLRS.

Belongs to the RapZ-like family.

Its function is as follows. Displays ATPase and GTPase activities. This chain is Nucleotide-binding protein lp_0779, found in Lactiplantibacillus plantarum (strain ATCC BAA-793 / NCIMB 8826 / WCFS1) (Lactobacillus plantarum).